The following is a 231-amino-acid chain: 7-cyano-7-deazaguanine synthase (231 aa).

Residue 17–27 participates in ATP binding; the sequence is FSGGMDSFTLL. Zn(2+) contacts are provided by Cys-193, Cys-201, Cys-204, and Cys-207.

It belongs to the QueC family. It depends on Zn(2+) as a cofactor.

It catalyses the reaction 7-carboxy-7-deazaguanine + NH4(+) + ATP = 7-cyano-7-deazaguanine + ADP + phosphate + H2O + H(+). The protein operates within purine metabolism; 7-cyano-7-deazaguanine biosynthesis. Functionally, catalyzes the ATP-dependent conversion of 7-carboxy-7-deazaguanine (CDG) to 7-cyano-7-deazaguanine (preQ(0)). This Hahella chejuensis (strain KCTC 2396) protein is 7-cyano-7-deazaguanine synthase.